Here is a 138-residue protein sequence, read N- to C-terminus: Putative nickel-responsive regulator (138 aa).

Positions 78, 89, 91, and 97 each coordinate Ni(2+).

It belongs to the transcriptional regulatory CopG/NikR family. It depends on Ni(2+) as a cofactor.

Functionally, transcriptional regulator. This chain is Putative nickel-responsive regulator, found in Desulfovibrio desulfuricans (strain ATCC 27774 / DSM 6949 / MB).